Reading from the N-terminus, the 306-residue chain is Cytochrome P450 monooxygenase aclO (306 aa).

A heme-binding site is contributed by Cys237.

This sequence belongs to the cytochrome P450 family. It depends on heme as a cofactor.

The protein operates within mycotoxin biosynthesis. Functionally, cytochrome P450 monooxygenase; part of the gene cluster that mediates the biosynthesis of aspirochlorine (or antibiotic A30641), an unusual halogenated spiro compound with distinctive antifungal properties due to selective inhibition of protein biosynthesis, and which is also active against bacteria, viruses, and murine tumor cells. The non-ribosomal peptide synthetase (NRPS) aclP is responsible the formation of the diketopiperazine (DKP) core from the condensation of 2 phenylalanine residues. One Phe residue is tailored into chlorotyrosine by hydroxylation and chlorination, whereas the second Phe undergoes an unprecedented C-C bond cleavage to be converted into glycine. After formation of the DKP, sulfur is incorporated into the DKP by conjugation with glutathione by aclG, followed by its stepwise degradation to the thiol by aclI, aclJ and aclK, and the dithiol oxidation by aclT. In addition, oxygenases (aclB, aclC, aclL and aclO) and O-methyltransferases (aclM and aclU) act as tailoring enzymes to produce the intermediate dechloroaspirochlorine. Ultimately, chlorination of dechloroaspirochlorine by the halogenase aclH is the last step in the aspirochlorine pathway. The sequence is that of Cytochrome P450 monooxygenase aclO from Aspergillus oryzae (strain ATCC 42149 / RIB 40) (Yellow koji mold).